The following is a 525-amino-acid chain: Apolipoprotein N-acyltransferase 2 (525 aa).

Transmembrane regions (helical) follow at residues 25-45, 56-76, 81-101, 115-135, 153-173, and 200-220; these read ILNF…YYAL, FLYG…LAFF, IFTL…FGFL, FFFA…FLAY, FVDI…AACL, and LIFT…ILSI. The CN hydrolase domain maps to 228–486; that stretch reads LNTVIVQQNT…AESVYTEVPV (259 aa). E274 serves as the catalytic Proton acceptor. The active site involves K339. The Nucleophile role is filled by C397. Residues 495–515 traverse the membrane as a helical segment; that stretch reads ASYKDWLPIMMFLILIFNIFL.

It belongs to the CN hydrolase family. Apolipoprotein N-acyltransferase subfamily.

Its subcellular location is the cell inner membrane. It carries out the reaction N-terminal S-1,2-diacyl-sn-glyceryl-L-cysteinyl-[lipoprotein] + a glycerophospholipid = N-acyl-S-1,2-diacyl-sn-glyceryl-L-cysteinyl-[lipoprotein] + a 2-acyl-sn-glycero-3-phospholipid + H(+). It functions in the pathway protein modification; lipoprotein biosynthesis (N-acyl transfer). Its function is as follows. Catalyzes the phospholipid dependent N-acylation of the N-terminal cysteine of apolipoprotein, the last step in lipoprotein maturation. The polypeptide is Apolipoprotein N-acyltransferase 2 (Treponema denticola (strain ATCC 35405 / DSM 14222 / CIP 103919 / JCM 8153 / KCTC 15104)).